An 86-amino-acid polypeptide reads, in one-letter code: Small ribosomal subunit protein uS17 (86 aa).

It belongs to the universal ribosomal protein uS17 family. As to quaternary structure, part of the 30S ribosomal subunit.

In terms of biological role, one of the primary rRNA binding proteins, it binds specifically to the 5'-end of 16S ribosomal RNA. In Chlamydia pneumoniae (Chlamydophila pneumoniae), this protein is Small ribosomal subunit protein uS17.